The sequence spans 781 residues: Protein argonaute (781 aa).

The 85-residue stretch at 110–194 folds into the PAZ domain; that stretch reads SMNELLTERR…RHNDYCNSVM (85 aa). One can recognise a Piwi domain in the interval 436-760; the sequence is LVVIVIPGPK…LSKFCGEVLR (325 aa).

This sequence belongs to the argonaute family. Ago subfamily. In terms of assembly, interacts with miR2. Highly specific binding to the mRNA m7G-cap. May be a component of the RNA-induced silencing complex (RISC), a sequence-specific, multicomponent nuclease that destroys or silences messenger RNAs homologous to the silencing trigger.

It localises to the cytoplasm. Functionally, plays an essential role in growth and, with Dicer, also involved in microRNA (miRNA)-mediated translational repression. The RNA interference pathway is implicated in antigenic variation having a role in regulation of variant-specific surface protein (VSP)-coding gene expression. Several VSP genes are transcribed but only transcripts encoding the VSP to be expressed accumulate. Antisense RNAs corresponding to the silenced VSP genes are detected. The polypeptide is Protein argonaute (Giardia intestinalis (Giardia lamblia)).